The primary structure comprises 597 residues: Aspartate--tRNA(Asp/Asn) ligase (597 aa).

Glutamate 170 is a binding site for L-aspartate. Residues glutamine 194–lysine 197 are aspartate. Arginine 216 is a binding site for L-aspartate. ATP-binding positions include arginine 216–glutamate 218 and glutamine 225. Histidine 448 is a binding site for L-aspartate. Glutamate 482 serves as a coordination point for ATP. Residue arginine 489 coordinates L-aspartate. Glycine 534 to arginine 537 is a binding site for ATP. Residues glycine 558–alanine 597 form a disordered region. The span at glutamine 575–alanine 597 shows a compositional bias: basic and acidic residues.

This sequence belongs to the class-II aminoacyl-tRNA synthetase family. Type 1 subfamily. As to quaternary structure, homodimer.

It localises to the cytoplasm. The enzyme catalyses tRNA(Asx) + L-aspartate + ATP = L-aspartyl-tRNA(Asx) + AMP + diphosphate. Aspartyl-tRNA synthetase with relaxed tRNA specificity since it is able to aspartylate not only its cognate tRNA(Asp) but also tRNA(Asn). Reaction proceeds in two steps: L-aspartate is first activated by ATP to form Asp-AMP and then transferred to the acceptor end of tRNA(Asp/Asn). The sequence is that of Aspartate--tRNA(Asp/Asn) ligase from Mycobacteroides abscessus (strain ATCC 19977 / DSM 44196 / CCUG 20993 / CIP 104536 / JCM 13569 / NCTC 13031 / TMC 1543 / L948) (Mycobacterium abscessus).